A 371-amino-acid polypeptide reads, in one-letter code: Queuine tRNA-ribosyltransferase (371 aa).

Asp-90 acts as the Proton acceptor in catalysis. Residues 90 to 94 (DSGGF), Asp-144, Gln-188, and Gly-215 contribute to the substrate site. Residues 246 to 252 (GVGTPED) are RNA binding. Asp-265 serves as the catalytic Nucleophile. The RNA binding; important for wobble base 34 recognition stretch occupies residues 270–274 (TRNAR). 4 residues coordinate Zn(2+): Cys-303, Cys-305, Cys-308, and His-334.

Belongs to the queuine tRNA-ribosyltransferase family. As to quaternary structure, homodimer. Within each dimer, one monomer is responsible for RNA recognition and catalysis, while the other monomer binds to the replacement base PreQ1. Zn(2+) is required as a cofactor.

It catalyses the reaction 7-aminomethyl-7-carbaguanine + guanosine(34) in tRNA = 7-aminomethyl-7-carbaguanosine(34) in tRNA + guanine. The protein operates within tRNA modification; tRNA-queuosine biosynthesis. Its function is as follows. Catalyzes the base-exchange of a guanine (G) residue with the queuine precursor 7-aminomethyl-7-deazaguanine (PreQ1) at position 34 (anticodon wobble position) in tRNAs with GU(N) anticodons (tRNA-Asp, -Asn, -His and -Tyr). Catalysis occurs through a double-displacement mechanism. The nucleophile active site attacks the C1' of nucleotide 34 to detach the guanine base from the RNA, forming a covalent enzyme-RNA intermediate. The proton acceptor active site deprotonates the incoming PreQ1, allowing a nucleophilic attack on the C1' of the ribose to form the product. After dissociation, two additional enzymatic reactions on the tRNA convert PreQ1 to queuine (Q), resulting in the hypermodified nucleoside queuosine (7-(((4,5-cis-dihydroxy-2-cyclopenten-1-yl)amino)methyl)-7-deazaguanosine). The polypeptide is Queuine tRNA-ribosyltransferase (Chromobacterium violaceum (strain ATCC 12472 / DSM 30191 / JCM 1249 / CCUG 213 / NBRC 12614 / NCIMB 9131 / NCTC 9757 / MK)).